Here is a 95-residue protein sequence, read N- to C-terminus: Large ribosomal subunit protein uL24c (95 aa).

It belongs to the universal ribosomal protein uL24 family. In terms of assembly, part of the 50S ribosomal subunit.

It localises to the plastid. Its subcellular location is the chloroplast. Functionally, one of two assembly initiator proteins, it binds directly to the 5'-end of the 23S rRNA, where it nucleates assembly of the 50S subunit. The sequence is that of Large ribosomal subunit protein uL24c (rpl24) from Porphyra purpurea (Red seaweed).